Here is a 156-residue protein sequence, read N- to C-terminus: Ribosomal RNA large subunit methyltransferase H (156 aa).

Residues L72, G104, and 123–128 (LSEMTL) each bind S-adenosyl-L-methionine.

The protein belongs to the RNA methyltransferase RlmH family. In terms of assembly, homodimer.

The protein localises to the cytoplasm. The catalysed reaction is pseudouridine(1915) in 23S rRNA + S-adenosyl-L-methionine = N(3)-methylpseudouridine(1915) in 23S rRNA + S-adenosyl-L-homocysteine + H(+). Specifically methylates the pseudouridine at position 1915 (m3Psi1915) in 23S rRNA. This is Ribosomal RNA large subunit methyltransferase H from Syntrophotalea carbinolica (strain DSM 2380 / NBRC 103641 / GraBd1) (Pelobacter carbinolicus).